A 2606-amino-acid chain; its full sequence is Large tegument protein deneddylase (2606 aa).

Residues 1–235 are deubiquitination activity; it reads MAFQAQTDTG…LKRSGAYVNL (235 aa). Residues 14–225 form the Peptidase C76 domain; the sequence is LATASSHQGD…LLANYGIASA (212 aa). Residues Cys34, Asp163, and His165 contribute to the active site. 5 disordered regions span residues 318–349, 390–411, 1020–1135, 2253–2316, and 2434–2458; these read IAIS…PNEA, DTDS…KSGQ, KKGL…ESSE, PEIH…PTPL, and PPHD…ERKY. The span at 1038 to 1050 shows a compositional bias: polar residues; sequence TPVTDSKLIQDSQ. The segment covering 1051–1061 has biased composition (basic and acidic residues); that stretch reads QNDRHQKEKPL. A compositionally biased stretch (polar residues) spans 1085–1097; sequence KPQNLSLPVSTNK. The segment covering 1105–1132 has biased composition (low complexity); it reads ESSPIESTSPSHSPVSSMESQNGSFSLE. Residues 2304–2316 show a composition bias toward pro residues; that stretch reads PNPPRPTTFPTPL.

Belongs to the herpesviridae large tegument protein family. Interacts with host CUL1 and CUL4A; these interactions inhibit the E3 ligase activity of cullins. Interacts with inner tegument protein. Interacts with capsid vertex specific component CVC2. Interacts with the major capsid protein/MCP.

It localises to the virion tegument. It is found in the host cytoplasm. Its subcellular location is the host nucleus. The enzyme catalyses Thiol-dependent hydrolysis of ester, thioester, amide, peptide and isopeptide bonds formed by the C-terminal Gly of ubiquitin (a 76-residue protein attached to proteins as an intracellular targeting signal).. Large tegument protein that plays multiple roles in the viral cycle. During viral entry, remains associated with the capsid while most of the tegument is detached and participates in the capsid transport toward the host nucleus. Plays a role in the routing of the capsid at the nuclear pore complex and subsequent uncoating. Within the host nucleus, acts as a deneddylase and promotes the degradation of nuclear CRLs (cullin-RING ubiquitin ligases) and thereby stabilizes nuclear CRL substrates, while cytoplasmic CRLs remain unaffected. These modifications prevent host cell cycle S-phase progression and create a favorable environment allowing efficient viral genome replication. Participates later in the secondary envelopment of capsids. Indeed, plays a linker role for the association of the outer viral tegument to the capsids together with the inner tegument protein. The sequence is that of Large tegument protein deneddylase (64) from Connochaetes taurinus (Blue wildebeest).